The following is a 181-amino-acid chain: ADP-ribosylation factor 1 (181 aa).

The N-myristoyl glycine moiety is linked to residue glycine 2. Residues 24 to 31 (GLDAAGKT), 67 to 71 (DVGGQ), and 126 to 129 (NKQD) contribute to the GTP site.

The protein belongs to the small GTPase superfamily. Arf family.

It localises to the golgi apparatus. The enzyme catalyses GTP + H2O = GDP + phosphate + H(+). Functionally, GTP-binding protein involved in protein trafficking; may modulate vesicle budding and uncoating within the Golgi apparatus. This Daucus carota (Wild carrot) protein is ADP-ribosylation factor 1 (ARF1).